Reading from the N-terminus, the 257-residue chain is uncharacterized protein (257 aa).

The helical transmembrane segment at 6–26 (IFWLNLAAIIIISIVVSGGMF) threads the bilayer.

The protein belongs to the staphylococcal tandem lipoprotein family.

Its subcellular location is the cell membrane. This is an uncharacterized protein from Staphylococcus aureus (strain N315).